Here is a 28-residue protein sequence, read N- to C-terminus: Conotoxin Cl1.2 (28 aa).

Contains 2 disulfide bonds. In terms of tissue distribution, expressed by the venom duct.

The protein resides in the secreted. The protein is Conotoxin Cl1.2 of Californiconus californicus (California cone).